Here is a 292-residue protein sequence, read N- to C-terminus: Probable alpha-L-glutamate ligase (292 aa).

One can recognise an ATP-grasp domain in the interval 104-287 (HQLLAAKGID…VATRIIEHVE (184 aa)). Residues Lys141, 178-179 (EF), Asp187, and 211-213 (RSN) contribute to the ATP site. Mg(2+)-binding residues include Asp248, Glu260, and Asn262. Positions 248, 260, and 262 each coordinate Mn(2+).

The protein belongs to the RimK family. The cofactor is Mg(2+). It depends on Mn(2+) as a cofactor.

The sequence is that of Probable alpha-L-glutamate ligase from Stenotrophomonas maltophilia (strain K279a).